Consider the following 482-residue polypeptide: tRNA sulfurtransferase (482 aa).

The region spanning 61-165 (LAIRDALTRI…DDRLLLIKGR (105 aa)) is the THUMP domain. ATP-binding positions include 183–184 (LI), lysine 265, glycine 287, and glutamine 296. Cysteine 344 and cysteine 456 form a disulfide bridge. The Rhodanese domain occupies 404 to 482 (FGANDVILDI…GFANVKVYRP (79 aa)). The Cysteine persulfide intermediate role is filled by cysteine 456.

This sequence belongs to the ThiI family.

It is found in the cytoplasm. The catalysed reaction is [ThiI sulfur-carrier protein]-S-sulfanyl-L-cysteine + a uridine in tRNA + 2 reduced [2Fe-2S]-[ferredoxin] + ATP + H(+) = [ThiI sulfur-carrier protein]-L-cysteine + a 4-thiouridine in tRNA + 2 oxidized [2Fe-2S]-[ferredoxin] + AMP + diphosphate. The enzyme catalyses [ThiS sulfur-carrier protein]-C-terminal Gly-Gly-AMP + S-sulfanyl-L-cysteinyl-[cysteine desulfurase] + AH2 = [ThiS sulfur-carrier protein]-C-terminal-Gly-aminoethanethioate + L-cysteinyl-[cysteine desulfurase] + A + AMP + 2 H(+). It functions in the pathway cofactor biosynthesis; thiamine diphosphate biosynthesis. Its function is as follows. Catalyzes the ATP-dependent transfer of a sulfur to tRNA to produce 4-thiouridine in position 8 of tRNAs, which functions as a near-UV photosensor. Also catalyzes the transfer of sulfur to the sulfur carrier protein ThiS, forming ThiS-thiocarboxylate. This is a step in the synthesis of thiazole, in the thiamine biosynthesis pathway. The sulfur is donated as persulfide by IscS. The protein is tRNA sulfurtransferase of Salmonella agona (strain SL483).